The chain runs to 526 residues: Sugar transport protein 13 (526 aa).

Topologically, residues 1–18 (MTGGGFATSANGVEFEAK) are cytoplasmic. Residues 19–39 (ITPIVIISCIMAATGGLMFGY) traverse the membrane as a helical segment. Residues 40–81 (DVGVSGGVTSMPDFLEKFFPVVYRKVVAGADKDSNYCKYDNQ) lie on the Extracellular side of the membrane. The helical transmembrane segment at 82–102 (GLQLFTSSLYLAGLTATFFAS) threads the bilayer. The Cytoplasmic segment spans residues 103–111 (YTTRTLGRR). A helical membrane pass occupies residues 112 to 132 (LTMLIAGVFFIIGVALNAGAQ). The Extracellular segment spans residues 133-141 (DLAMLIAGR). A helical membrane pass occupies residues 142-162 (ILLGCGVGFANQAVPLFLSEI). Topologically, residues 163 to 168 (APTRIR) are cytoplasmic. A helical membrane pass occupies residues 169 to 189 (GGLNILFQLNVTIGILFANLV). The Extracellular portion of the chain corresponds to 190-203 (NYGTAKIKGGWGWR). Residues 204-224 (LSLGLAGIPALLLTVGALLVT) traverse the membrane as a helical segment. Over 225–296 (ETPNSLVERG…IAVALQIFQQ (72 aa)) the chain is Cytoplasmic. Residues 297–317 (CTGINAIMFYAPVLFSTLGFG) traverse the membrane as a helical segment. Residues 318 to 319 (SD) lie on the Extracellular side of the membrane. A helical transmembrane segment spans residues 320-340 (ASLYSAVVTGAVNVLSTLVSI). Topologically, residues 341–349 (YSVDKVGRR) are cytoplasmic. Residues 350–370 (VLLLEAGVQMFFSQVVIAIIL) form a helical membrane-spanning segment. Over 371-383 (GVKVTDTSTNLSK) the chain is Extracellular. A helical transmembrane segment spans residues 384 to 404 (GFAILVVVMICTYVAAFAWSW). Residues 405–426 (GPLGWLIPSETFPLETRSAGQS) are Cytoplasmic-facing. Residues 427 to 447 (VTVCVNLLFTFIIAQAFLSML) traverse the membrane as a helical segment. At 448–451 (CHFK) the chain is on the extracellular side. A helical transmembrane segment spans residues 452-472 (FGIFIFFSAWVLIMSVFVMFL). Residues 473–526 (LPETKNIPIEEMTERVWKKHWFWARFMDDHNDHEFVNGEKSNGKSNGFDPSTRL) lie on the Cytoplasmic side of the membrane.

This sequence belongs to the major facilitator superfamily. Sugar transporter (TC 2.A.1.1) family.

Its subcellular location is the cell membrane. Functionally, mediates an active uptake of hexoses, probably by sugar/hydrogen symport. The sequence is that of Sugar transport protein 13 (STP13) from Arabidopsis thaliana (Mouse-ear cress).